The primary structure comprises 273 residues: Large ribosomal subunit protein uL2cz/uL2cy (273 aa).

2 disordered regions span residues 1 to 22 and 225 to 273; these read MAKH…DRQV and PVDH…RRRK.

It belongs to the universal ribosomal protein uL2 family. As to quaternary structure, part of the 50S ribosomal subunit.

It is found in the plastid. It localises to the chloroplast. The sequence is that of Large ribosomal subunit protein uL2cz/uL2cy (rpl2-A) from Zea mays (Maize).